Consider the following 406-residue polypeptide: MRAAESGADARVRPVDRVEPADAPAGDAGGLRAAVPGDGGSAVRPGDARLDVLVPPGLVDEPAAGALPGGGQRAPGAGRADGGDVRPVGGRDADGAPRFDQPVPPGGYLWWYVDAVSDDGRHGLTFIAFVGSVFSPYYAWAGGPKADRADPENHCALNIALYGDAGKRWTMTERGRRWMRRSRDEFVIGPSRLHWDGESLLVEFDEVGVPIPRRVKGRVRVWPKALCRFVTSLDSGGRHRWGPIAPCSRIEVELDSPRVRWSGHAYLDSNEGDEPIDRPFREWDWSRATMADSSTAVIYDVRQKRDGDRVIAERFLLDGSTESFEAPPRQPLPTTLWRIGRTMRTEPGVPALVEQTLEDTPFYARSMVRSGLLGEVVTSVHETMLLPRVITLPVRLMLPWRMPRRA.

2 disordered regions span residues 1-48 (MRAA…PGDA) and 61-101 (EPAA…RFDQ). The segment covering 8–20 (ADARVRPVDRVEP) has biased composition (basic and acidic residues). The span at 21 to 34 (ADAPAGDAGGLRAA) shows a compositional bias: low complexity. Positions 81-97 (DGGDVRPVGGRDADGAP) are enriched in basic and acidic residues.

The protein belongs to the CrtC hydratase family.

The protein resides in the cell membrane. The enzyme catalyses rhodopin = all-trans-lycopene + H2O. It catalyses the reaction 1,1'-dihydroxy-1,1',2,2'-tetrahydrolycopene = rhodopin + H2O. The catalysed reaction is 1-hydroxy-all-trans-1,2-dihydro-neurosporene = all-trans-neurosporene + H2O. It carries out the reaction 1,1'-dihydroxy-1,1',2,2'-tetrahydroneurosporene = 1-hydroxy-all-trans-1,2-dihydro-neurosporene + H2O. It functions in the pathway carotenoid biosynthesis; spheroidene biosynthesis. Involved in the biosynthesis of carotenoids spheroidene and spirilloxanthin. Catalyzes the hydration of neurosporene to the corresponding hydroxylated carotenoids 1-HO-neurosporene and 1,1'-(HO)2-neurosporene and that of lycopene to 1-HO-lycopene and 1,1'-(HO)2-lycopene. Can also act on demethylspheroidene, spheroidene, 1-HO-3,4-didehydrolycopene and geranylgeraniol. The sequence is that of Acyclic carotenoid 1,2-hydratase (crtC) from Rubrivivax gelatinosus (Rhodocyclus gelatinosus).